The chain runs to 561 residues: Centromere protein T (561 aa).

The disordered stretch occupies residues 1–83 (MADHNPDSDS…HIQASGHLEE (83 aa)). Residues 18 to 27 (RVLDTADPRT) show a composition bias toward basic and acidic residues. The segment covering 34–46 (ARAGARRALLETA) has biased composition (low complexity). Phosphoserine is present on Ser-47. Thr-85 is subject to Phosphothreonine. The interval 93 to 421 (ILLTAPESSI…RHHQFLEPAP (329 aa)) is flexible stalk domain. 2 disordered regions span residues 256 to 292 (HSLP…PGKP) and 333 to 457 (AEKK…DPHK). The segment covering 276–288 (KTQSSGPGLQKNS) has biased composition (polar residues). Residues Ser-343, Ser-345, and Ser-356 each carry the phosphoserine modification. A compositionally biased stretch (basic and acidic residues) spans 357–367 (RVEEAEGHTEV). Ser-373, Ser-385, Ser-386, and Ser-397 each carry phosphoserine. The span at 395 to 407 (AASPESASSTPES) shows a compositional bias: low complexity.

Belongs to the CENP-T/CNN1 family. In terms of assembly, component of the CENPA-CAD complex, composed of CENPI, CENPK, CENPL, CENPO, CENPP, CENPQ, CENPR and CENPS. The CENPA-CAD complex is probably recruited on centromeres by the CENPA-NAC complex, at least composed of CENPA, CENPC, CENPH, CENPM, CENPN, CENPT and CENPU. Identified in a centromeric complex containing histones H2A, H2B, H3 and H4, and at least CENPA, CENPB, CENPC, CENPT, CENPN, HJURP, SUPT16H, SSRP1 and RSF1. Interacts (via N-terminus) with the NDC80 complex. Heterodimer with CENPW; this dimer coassembles with CENPS-CENPX heterodimers at centromeres to form the tetrameric CENP-T-W-S-X complex. Post-translationally, dynamically phosphorylated at Ser-47 and probably also other sites during the cell cycle. Phosphorylated at Ser-47 during G2 phase, metaphase and anaphase, but not during telophase or G1 phase.

It is found in the nucleus. The protein resides in the chromosome. It localises to the centromere. Its subcellular location is the kinetochore. In terms of biological role, component of the CENPA-NAC (nucleosome-associated) complex, a complex that plays a central role in assembly of kinetochore proteins, mitotic progression and chromosome segregation. The CENPA-NAC complex recruits the CENPA-CAD (nucleosome distal) complex and may be involved in incorporation of newly synthesized CENPA into centromeres. Part of a nucleosome-associated complex that binds specifically to histone H3-containing nucleosomes at the centromere, as opposed to nucleosomes containing CENPA. Component of the heterotetrameric CENP-T-W-S-X complex that binds and supercoils DNA, and plays an important role in kinetochore assembly. CENPT has a fundamental role in kinetochore assembly and function. It is one of the inner kinetochore proteins, with most further proteins binding downstream. Required for normal chromosome organization and normal progress through mitosis. The protein is Centromere protein T (CENPT) of Homo sapiens (Human).